The sequence spans 307 residues: Nicotinamide/nicotinic acid mononucleotide adenylyltransferase 2 (307 aa).

NAD(+) contacts are provided by S16 and F17. H24 provides a ligand contact to ATP. NAD(+)-binding residues include W92, T95, G200, D202, L212, W213, and R232. 271 to 274 (TKSR) is an ATP binding site.

This sequence belongs to the eukaryotic NMN adenylyltransferase family. As to quaternary structure, monomer. The cofactor is Mg(2+).

It is found in the golgi apparatus membrane. It localises to the cytoplasmic vesicle membrane. The protein localises to the cytoplasm. The protein resides in the cell projection. Its subcellular location is the axon. The enzyme catalyses beta-nicotinamide D-ribonucleotide + ATP + H(+) = diphosphate + NAD(+). The catalysed reaction is nicotinate beta-D-ribonucleotide + ATP + H(+) = deamido-NAD(+) + diphosphate. It functions in the pathway cofactor biosynthesis; NAD(+) biosynthesis; NAD(+) from nicotinamide D-ribonucleotide: step 1/1. It participates in cofactor biosynthesis; NAD(+) biosynthesis; deamido-NAD(+) from nicotinate D-ribonucleotide: step 1/1. Functionally, nicotinamide/nicotinate-nucleotide adenylyltransferase that acts as an axon maintenance factor. Axon survival factor required for the maintenance of healthy axons: acts by delaying Wallerian axon degeneration, an evolutionarily conserved process that drives the loss of damaged axons. Catalyzes the formation of NAD(+) from nicotinamide mononucleotide (NMN) and ATP. Can also use the deamidated form; nicotinic acid mononucleotide (NaMN) as substrate but with a lower efficiency. Also catalyzes the reverse reaction, i.e. the pyrophosphorolytic cleavage of NAD(+). For the pyrophosphorolytic activity prefers NAD(+), NADH and NaAD as substrates and degrades nicotinic acid adenine dinucleotide phosphate (NHD) less effectively. Also acts as an activator of ADP-ribosylation by supporting the catalytic activity of PARP16 and promoting mono-ADP-ribosylation of ribosomes by PARP16. May be involved in the maintenance of axonal integrity. The polypeptide is Nicotinamide/nicotinic acid mononucleotide adenylyltransferase 2 (nmnat2) (Xenopus tropicalis (Western clawed frog)).